Reading from the N-terminus, the 572-residue chain is Sialate:O-sulfotransferase 1 (572 aa).

Residues Met1–Arg14 are Cytoplasmic-facing. The chain crosses the membrane as a helical; Signal-anchor for type II membrane protein span at residues Thr15–Leu35. The Extracellular portion of the chain corresponds to Gln36–Arg572. An N-linked (GlcNAc...) asparagine glycan is attached at Asn105. WSC domains lie at Arg139–Gly231 and Thr242–Cys337. Asn254 carries N-linked (GlcNAc...) asparagine glycosylation.

It belongs to the WSCD family.

Its subcellular location is the golgi apparatus membrane. It catalyses the reaction a ganglioside GM1b + 3'-phosphoadenylyl sulfate = an 8-O-sulfo-ganglioside GM1b + adenosine 3',5'-bisphosphate + H(+). In terms of biological role, sialate:O-sulfotransferase which catalyzes 8-O-sulfation at the Sia-glycan level using 3'-phosphoadenosine 5'-phosphosulfate (PAPS) as a donor, forming 8-O-sulfated Sia (Sia8S)-glycans. Displays selectivity toward glycolipids such as GM1 gangliosides. The protein is Sialate:O-sulfotransferase 1 (Wscd1) of Mus musculus (Mouse).